The chain runs to 312 residues: Glyoxylate/hydroxypyruvate reductase A (312 aa).

Residue R227 is part of the active site. H275 functions as the Proton donor in the catalytic mechanism.

It belongs to the D-isomer specific 2-hydroxyacid dehydrogenase family. GhrA subfamily.

The protein localises to the cytoplasm. The enzyme catalyses glycolate + NADP(+) = glyoxylate + NADPH + H(+). It carries out the reaction (R)-glycerate + NAD(+) = 3-hydroxypyruvate + NADH + H(+). The catalysed reaction is (R)-glycerate + NADP(+) = 3-hydroxypyruvate + NADPH + H(+). Catalyzes the NADPH-dependent reduction of glyoxylate and hydroxypyruvate into glycolate and glycerate, respectively. The chain is Glyoxylate/hydroxypyruvate reductase A from Escherichia coli O127:H6 (strain E2348/69 / EPEC).